Consider the following 340-residue polypeptide: uncharacterized protein (340 aa).

This is an uncharacterized protein from Archaeoglobus fulgidus (strain ATCC 49558 / DSM 4304 / JCM 9628 / NBRC 100126 / VC-16).